A 632-amino-acid chain; its full sequence is tRNA uridine 5-carboxymethylaminomethyl modification enzyme MnmG (632 aa).

FAD is bound by residues 15–20 (GAGHAG), Val-127, and Ser-182. A disordered region spans residues 203 to 226 (TPPRVKSSTIDYSKTEEQPGDDHP). Over residues 215–226 (SKTEEQPGDDHP) the composition is skewed to basic and acidic residues. 274-288 (GARYCPSIEDKIVRF) is an NAD(+) binding site. FAD is bound at residue Gln-371.

This sequence belongs to the MnmG family. As to quaternary structure, homodimer. Heterotetramer of two MnmE and two MnmG subunits. It depends on FAD as a cofactor.

The protein localises to the cytoplasm. Functionally, NAD-binding protein involved in the addition of a carboxymethylaminomethyl (cmnm) group at the wobble position (U34) of certain tRNAs, forming tRNA-cmnm(5)s(2)U34. This Listeria monocytogenes serotype 4b (strain F2365) protein is tRNA uridine 5-carboxymethylaminomethyl modification enzyme MnmG.